We begin with the raw amino-acid sequence, 279 residues long: Probable phosphatase phospho1 (279 aa).

The active-site Nucleophile is Asp41. Mg(2+) contacts are provided by Asp41 and Asp43. Asp43 acts as the Proton donor in catalysis. Positions 52 and 133 each coordinate substrate. Asp215 is a Mg(2+) binding site.

The protein belongs to the HAD-like hydrolase superfamily. PHOSPHO family. It depends on Mg(2+) as a cofactor.

It is found in the extracellular vesicle. It carries out the reaction phosphoethanolamine + H2O = ethanolamine + phosphate. The catalysed reaction is phosphocholine + H2O = choline + phosphate. In terms of biological role, phosphatase that has a high activity toward phosphoethanolamine (PEA) and phosphocholine (PCho). Involved in the generation of inorganic phosphate for bone mineralization. This chain is Probable phosphatase phospho1 (phospho1), found in Danio rerio (Zebrafish).